A 34-amino-acid chain; its full sequence is Photosystem I reaction center subunit XII (34 aa).

A helical transmembrane segment spans residues 11–31 (VAIAFVVALIAGIAALLLSTA).

Belongs to the PsaM family. As to quaternary structure, the G.violaceus PSI reaction center is composed of one copy each of PsaA,B,C,D,E,F,L,M and Z, and forms trimeric complexes.

The protein resides in the cell inner membrane. The protein is Photosystem I reaction center subunit XII of Gloeobacter violaceus (strain ATCC 29082 / PCC 7421).